The following is a 160-amino-acid chain: SsrA-binding protein (160 aa).

The protein belongs to the SmpB family.

It is found in the cytoplasm. Its function is as follows. Required for rescue of stalled ribosomes mediated by trans-translation. Binds to transfer-messenger RNA (tmRNA), required for stable association of tmRNA with ribosomes. tmRNA and SmpB together mimic tRNA shape, replacing the anticodon stem-loop with SmpB. tmRNA is encoded by the ssrA gene; the 2 termini fold to resemble tRNA(Ala) and it encodes a 'tag peptide', a short internal open reading frame. During trans-translation Ala-aminoacylated tmRNA acts like a tRNA, entering the A-site of stalled ribosomes, displacing the stalled mRNA. The ribosome then switches to translate the ORF on the tmRNA; the nascent peptide is terminated with the 'tag peptide' encoded by the tmRNA and targeted for degradation. The ribosome is freed to recommence translation, which seems to be the essential function of trans-translation. This chain is SsrA-binding protein, found in Klebsiella pneumoniae (strain 342).